A 357-amino-acid chain; its full sequence is Acyl-coenzyme A:6-aminopenicillanic-acid-acyltransferase 40 kDa form (357 aa).

Aspartate 121 and arginine 310 together coordinate 6-aminopenicillanate.

Belongs to the peptidase C45 family. In terms of assembly, the active form of the enzyme results from processing of the 40-kDa monomeric precursor to a heterodimer containing subunits of 11 and 29 kDa. Post-translationally, the pre-AAT protein is synthesized as 40 kDa precursor which is then self-processed into an 11 kDa (protein A) and a 29 kDa (protein B). The B protein carries AAT activity.

The protein localises to the peroxisome matrix. It carries out the reaction isopenicillin N + phenylacetyl-CoA + H2O = penicillin G + L-2-aminoadipate + CoA + H(+). Its pathway is antibiotic biosynthesis; penicillin G biosynthesis; penicillin G from L-alpha-aminoadipate and L-cysteine and L-valine: step 3/3. Its function is as follows. Nonribosomal peptide synthetase; part of the gene cluster that mediates the biosynthesis of penicillin, the world's most important antibiotic. AatA catalyzes the exchange of the alpha-aminoadipyl side chain of isopenicillin N for phenylacetic acid to yield penicillin. This step occurs in the peroxisomal matrix and the penM and paaT transporters are involved in the isopenicillin N and phenylacetic acid import into the peroxisome, respectively. The penicillin biosynthesis occurs via 3 enzymatic steps, the first corresponding to the production of the tripeptide N-[(5S)-5-amino-5-carboxypentanoyl]-L-cysteinyl-D-valine (LLD-ACV or ACV) by the NRPS acvA. The tripeptide ACV is then cyclized to isopenicillin N (IPN) by the isopenicillin N synthase ipnA that forms the beta-lactam nucleus. Finally, the alpha-aminoadipyl side chain is exchanged for phenylacetic acid by the isopenicillin N acyltransferase penDE to yield penicillin in the peroxisomal matrix. This is Acyl-coenzyme A:6-aminopenicillanic-acid-acyltransferase 40 kDa form from Emericella nidulans (strain FGSC A4 / ATCC 38163 / CBS 112.46 / NRRL 194 / M139) (Aspergillus nidulans).